The chain runs to 580 residues: Nuclear body protein SP140-like protein (580 aa).

An HSR domain is found at 33–149; the sequence is SLQRLFTEDQ…IYKSFKNAIQ (117 aa). The segment at 155–293 is disordered; sequence QESDRKEREE…RSRASRKHKD (139 aa). A compositionally biased stretch (basic and acidic residues) spans 156–170; it reads ESDRKEREERPDIKL. K169 is covalently cross-linked (Glycyl lysine isopeptide (Lys-Gly) (interchain with G-Cter in SUMO2)). A Phosphoserine modification is found at S180. A compositionally biased stretch (basic residues) spans 207 to 219; the sequence is KPKRKRRKKKGHG. Residues 224-236 show a composition bias toward polar residues; sequence GTRTQKNNQQNDN. A compositionally biased stretch (basic residues) spans 280 to 290; the sequence is QKRVRSRASRK. K292 is covalently cross-linked (Glycyl lysine isopeptide (Lys-Gly) (interchain with G-Cter in SUMO2)). The SAND domain maps to 293–374; that stretch reads DETVDFQAPL…RRLMEEGSLP (82 aa). A PHD-type zinc finger spans residues 403-449; sequence LDECEVCRDGGELFCCDTCSRVFHEDCHIPPVESEKTPWNCIFCRMK. Residues 467–570 enclose the Bromo domain; the sequence is QMCPEEQLKC…AEFEKDFKEV (104 aa).

This is Nuclear body protein SP140-like protein (SP140L) from Homo sapiens (Human).